We begin with the raw amino-acid sequence, 101 residues long: Small ribosomal subunit protein uS14 (101 aa).

Belongs to the universal ribosomal protein uS14 family. Part of the 30S ribosomal subunit. Contacts proteins S3 and S10.

Binds 16S rRNA, required for the assembly of 30S particles and may also be responsible for determining the conformation of the 16S rRNA at the A site. This Cereibacter sphaeroides (strain ATCC 17029 / ATH 2.4.9) (Rhodobacter sphaeroides) protein is Small ribosomal subunit protein uS14.